Consider the following 1709-residue polypeptide: Intraflagellar transport protein 122 (1709 aa).

WD repeat units lie at residues 51–89 (TQHPLVTCLAISPDGHMVVSMGTDGAVMFNDSTGAALFK) and 132–171 (SFKGTPRAIAWAPGSDWFVISTQDGDLVIMTPEGMELNSC). A disordered region spans residues 209 to 229 (TIPQTVTPSASASGRSGSGKR). The WD 3 repeat unit spans residues 634–673 (LHRSPIVSLDISPDRKYISVVDRSDVVSVYKFLDDSEIVL). The stretch at 1231-1256 (IEALERLRLSGNTSKEAIIIKQLIDA) is one LRR 1 repeat. The segment at 1378–1404 (LSGEDTVKASSQRSKKDNPPSLRSTIG) is disordered. One copy of the LRR 2 repeat lies at 1414 to 1436 (LGSLAHIDLGINNMNIPPGISEL).

The protein resides in the cell projection. Its subcellular location is the cilium. It localises to the flagellum. It is found in the cytoplasm. The protein localises to the cytoskeleton. The protein resides in the flagellum axoneme. Its subcellular location is the flagellum basal body. Its function is as follows. Component of the intraflagellar transport complex A (IFT-A) involved in flagellar assembly. In Giardia intestinalis (strain ATCC 50803 / WB clone C6) (Giardia lamblia), this protein is Intraflagellar transport protein 122.